Consider the following 72-residue polypeptide: Translation initiation factor IF-1 (72 aa).

The S1-like domain occupies 1–72 (MSKQSSIEQD…TKGRIVFRYK (72 aa)).

Belongs to the IF-1 family. As to quaternary structure, component of the 30S ribosomal translation pre-initiation complex which assembles on the 30S ribosome in the order IF-2 and IF-3, IF-1 and N-formylmethionyl-tRNA(fMet); mRNA recruitment can occur at any time during PIC assembly.

The protein localises to the cytoplasm. In terms of biological role, one of the essential components for the initiation of protein synthesis. Stabilizes the binding of IF-2 and IF-3 on the 30S subunit to which N-formylmethionyl-tRNA(fMet) subsequently binds. Helps modulate mRNA selection, yielding the 30S pre-initiation complex (PIC). Upon addition of the 50S ribosomal subunit IF-1, IF-2 and IF-3 are released leaving the mature 70S translation initiation complex. The protein is Translation initiation factor IF-1 of Cytophaga hutchinsonii (strain ATCC 33406 / DSM 1761 / CIP 103989 / NBRC 15051 / NCIMB 9469 / D465).